A 378-amino-acid chain; its full sequence is Chaperone protein DnaJ (378 aa).

The 66-residue stretch at 5–70 folds into the J domain; that stretch reads DYYEVLGVGR…NKKAAYDQFG (66 aa). Residues 134 to 212 form a CR-type zinc finger; the sequence is GLTKELRIPT…CHGDGRVEKT (79 aa). Cys-147, Cys-150, Cys-164, Cys-167, Cys-186, Cys-189, Cys-200, and Cys-203 together coordinate Zn(2+). 4 CXXCXGXG motif repeats span residues 147 to 154, 164 to 171, 186 to 193, and 200 to 207; these read CDVCDGSG, CTTCHGQG, CPTCHGRG, and CAKCHGDG.

This sequence belongs to the DnaJ family. Homodimer. It depends on Zn(2+) as a cofactor.

It is found in the cytoplasm. Functionally, participates actively in the response to hyperosmotic and heat shock by preventing the aggregation of stress-denatured proteins and by disaggregating proteins, also in an autonomous, DnaK-independent fashion. Unfolded proteins bind initially to DnaJ; upon interaction with the DnaJ-bound protein, DnaK hydrolyzes its bound ATP, resulting in the formation of a stable complex. GrpE releases ADP from DnaK; ATP binding to DnaK triggers the release of the substrate protein, thus completing the reaction cycle. Several rounds of ATP-dependent interactions between DnaJ, DnaK and GrpE are required for fully efficient folding. Also involved, together with DnaK and GrpE, in the DNA replication of plasmids through activation of initiation proteins. The polypeptide is Chaperone protein DnaJ (Shewanella oneidensis (strain ATCC 700550 / JCM 31522 / CIP 106686 / LMG 19005 / NCIMB 14063 / MR-1)).